Consider the following 491-residue polypeptide: Putative mannan endo-1,4-beta-mannosidase 5 (491 aa).

Residues 1-31 (METSYREEEARRKASLLHCIFFFLLGALAMA) form the signal peptide. 2 residues coordinate substrate: Trp-134 and Asn-248. Glu-249 acts as the Proton donor in catalysis. A substrate-binding site is contributed by Tyr-330. Glu-372 serves as the catalytic Nucleophile. An N-linked (GlcNAc...) asparagine glycan is attached at Asn-385. Residue Trp-416 participates in substrate binding. The N-linked (GlcNAc...) asparagine glycan is linked to Asn-471.

This sequence belongs to the glycosyl hydrolase 5 (cellulase A) family. In terms of tissue distribution, expression not detected.

It localises to the secreted. The catalysed reaction is Random hydrolysis of (1-&gt;4)-beta-D-mannosidic linkages in mannans, galactomannans and glucomannans.. The sequence is that of Putative mannan endo-1,4-beta-mannosidase 5 (MAN5) from Oryza sativa subsp. japonica (Rice).